The chain runs to 615 residues: Glutamine--fructose-6-phosphate aminotransferase [isomerizing] (615 aa).

The active-site Nucleophile; for GATase activity is the Cys-2. Positions 2–220 (CGIVGYVGPQ…QDQVVELRRD (219 aa)) constitute a Glutamine amidotransferase type-2 domain. SIS domains lie at 287–427 (IPPG…VRGT) and 460–605 (LARS…VDQP). Lys-610 acts as the For Fru-6P isomerization activity in catalysis.

As to quaternary structure, homodimer.

It is found in the cytoplasm. The catalysed reaction is D-fructose 6-phosphate + L-glutamine = D-glucosamine 6-phosphate + L-glutamate. Its function is as follows. Catalyzes the first step in hexosamine metabolism, converting fructose-6P into glucosamine-6P using glutamine as a nitrogen source. The sequence is that of Glutamine--fructose-6-phosphate aminotransferase [isomerizing] from Streptomyces coelicolor (strain ATCC BAA-471 / A3(2) / M145).